Reading from the N-terminus, the 612-residue chain is Alpha-glycerophosphate oxidase (612 aa).

Position 21-49 (Asp-21–Glu-49) interacts with FAD. Basic and acidic residues predominate over residues Glu-399 to Asp-408. Positions Glu-399 to Phe-418 are disordered.

The protein belongs to the FAD-dependent glycerol-3-phosphate dehydrogenase family. FAD is required as a cofactor.

It localises to the cytoplasm. It carries out the reaction sn-glycerol 3-phosphate + O2 = dihydroxyacetone phosphate + H2O2. The chain is Alpha-glycerophosphate oxidase (glpO) from Streptococcus pyogenes serotype M1.